The chain runs to 256 residues: Glucosamine-6-phosphate deaminase (256 aa).

Residue D68 is the Proton acceptor; for enolization step of the active site. Residue N137 is the For ring-opening step of the active site. The Proton acceptor; for ring-opening step role is filled by H139. The active-site For ring-opening step is the E144.

Belongs to the glucosamine/galactosamine-6-phosphate isomerase family. NagB subfamily.

It carries out the reaction alpha-D-glucosamine 6-phosphate + H2O = beta-D-fructose 6-phosphate + NH4(+). It functions in the pathway amino-sugar metabolism; N-acetylneuraminate degradation; D-fructose 6-phosphate from N-acetylneuraminate: step 5/5. Functionally, catalyzes the reversible isomerization-deamination of glucosamine 6-phosphate (GlcN6P) to form fructose 6-phosphate (Fru6P) and ammonium ion. This Mycoplasmopsis pulmonis (strain UAB CTIP) (Mycoplasma pulmonis) protein is Glucosamine-6-phosphate deaminase.